The sequence spans 444 residues: Porin AaxA (444 aa).

An N-terminal signal peptide occupies residues 1–19 (MAFSRFYLLTALYTGGILA). Residues 42-68 (KNSTQDSDSSPSESSPHPRQEPRRHVL) form a disordered region. Residues 46-56 (QDSDSSPSESS) show a composition bias toward low complexity.

It belongs to the OprB family.

The protein resides in the cell outer membrane. Functionally, facilitates L-arginine uptake, as part of the AaxABC system. The arginine uptake by the bacterium in the macrophage may be a virulence factor against the host innate immune response. This chain is Porin AaxA (aaxA), found in Chlamydia felis (strain Fe/C-56) (Chlamydophila felis).